A 472-amino-acid polypeptide reads, in one-letter code: E3 ubiquitin-protein ligase MYLIP-A (472 aa).

An FERM domain is found at 1-279 (MLCHVTRPDA…ETHAFYRCDT (279 aa)). The RING-type zinc-finger motif lies at 384–419 (CMLCCEEEIDAAFCPCGHMVCCQNCAAQLQSCPVCR).

Interacts with anxa5. As to expression, ubiquitous.

Its subcellular location is the cytoplasm. It localises to the cytosol. The catalysed reaction is S-ubiquitinyl-[E2 ubiquitin-conjugating enzyme]-L-cysteine + [acceptor protein]-L-lysine = [E2 ubiquitin-conjugating enzyme]-L-cysteine + N(6)-ubiquitinyl-[acceptor protein]-L-lysine.. It functions in the pathway protein modification; protein ubiquitination. E3 ubiquitin-protein ligase that mediates ubiquitination and subsequent proteasomal degradation of myosin regulatory light chain (MRLC). Regulates cell movements during gastrulation by acting downstream of fz7 to antagonize the frizzled-signaling pathway. This chain is E3 ubiquitin-protein ligase MYLIP-A (mylipa), found in Danio rerio (Zebrafish).